We begin with the raw amino-acid sequence, 213 residues long: LexA repressor (213 aa).

The segment at residues 27–47 (QTEIARAFGFKGVRAAQYHLE) is a DNA-binding region (H-T-H motif). Residues serine 133 and lysine 170 each act as for autocatalytic cleavage activity in the active site.

It belongs to the peptidase S24 family. Homodimer.

The enzyme catalyses Hydrolysis of Ala-|-Gly bond in repressor LexA.. Represses a number of genes involved in the response to DNA damage (SOS response), including recA and lexA. In the presence of single-stranded DNA, RecA interacts with LexA causing an autocatalytic cleavage which disrupts the DNA-binding part of LexA, leading to derepression of the SOS regulon and eventually DNA repair. This Xanthomonas campestris protein is LexA repressor.